Here is a 513-residue protein sequence, read N- to C-terminus: Probable E3 ubiquitin-protein ligase XBOS34 (513 aa).

ANK repeat units follow at residues 39–69 (EGKTPLMVASMRPDLINVVQVLIELGANVNA), 75–104 (YCGTALHHAAKKGLEQTVHLLLSHGANPFI), and 108–137 (DCHTALDLAREKGHVNVVRAIEGRISLFCG). Composition is skewed to polar residues over residues 309–327 (ITTTTATNDWGNPPSNSLN) and 335–355 (SAPSKTSGQVPVVTSSSSTYN). Disordered regions lie at residues 309–378 (ITTT…QNST) and 423–455 (SADGGTAVSSAKPAENEGDAKPAESDANASNSG). Residues 361 to 378 (GTSSGQSSSKHNKSQNST) are compositionally biased toward low complexity. Positions 436-446 (AENEGDAKPAE) are enriched in basic and acidic residues. The RING-type zinc-finger motif lies at 462–501 (CVICLDAPVEGACIPCGHMAGCMSCLKDIESKKWGCPICR).

The catalysed reaction is S-ubiquitinyl-[E2 ubiquitin-conjugating enzyme]-L-cysteine + [acceptor protein]-L-lysine = [E2 ubiquitin-conjugating enzyme]-L-cysteine + N(6)-ubiquitinyl-[acceptor protein]-L-lysine.. It participates in protein modification; protein ubiquitination. The protein is Probable E3 ubiquitin-protein ligase XBOS34 (XBOS34) of Oryza sativa subsp. japonica (Rice).